Reading from the N-terminus, the 248-residue chain is Pyruvate formate-lyase-activating enzyme (248 aa).

One can recognise a Radical SAM core domain in the interval 17-248; that stretch reads VDGPGIRFIV…NKILETSSYK (232 aa). Positions 31, 35, and 38 each coordinate [4Fe-4S] cluster. Residues 37–39, Gly-80, 135–137, and His-208 each bind S-adenosyl-L-methionine; these read FCH and DIK.

This sequence belongs to the organic radical-activating enzymes family. The cofactor is [4Fe-4S] cluster.

It localises to the cytoplasm. The enzyme catalyses glycyl-[formate C-acetyltransferase] + reduced [flavodoxin] + S-adenosyl-L-methionine = glycin-2-yl radical-[formate C-acetyltransferase] + semiquinone [flavodoxin] + 5'-deoxyadenosine + L-methionine + H(+). Functionally, activation of pyruvate formate-lyase under anaerobic conditions by generation of an organic free radical, using S-adenosylmethionine and reduced flavodoxin as cosubstrates to produce 5'-deoxy-adenosine. This chain is Pyruvate formate-lyase-activating enzyme (pflA), found in Listeria innocua serovar 6a (strain ATCC BAA-680 / CLIP 11262).